The primary structure comprises 506 residues: Probable lipid II flippase MurJ (506 aa).

The next 13 helical transmembrane spans lie at 4–24 (YVVSTILVMISTFFSRIMGFV), 86–106 (TVITFNIISIGLIVLVMIIFA), 127–147 (VFGYLVLYILLISLSSIFVSV), 153–173 (IFFIPSFSPIMLSFGIILSIF), 181–201 (IYSAVIGVIFGGFLQFLIPFA), 232–252 (IFGFSISIITQQISFALASTL), 263–283 (AVVYYQLPVGIFYISIATVIF), 308–328 (ILLLIFIPVSFLMFIWSDYIL), 345–365 (TASVLKCFLLGLLFYSMFGFF), 377–397 (TPFYLSVLFSILDIAISVFGI), 405–425 (LALAQSISFMICVIVFYFIIL), 436–456 (ILFVLLKSIITLFPLYAIYFF), and 474–494 (LMAAGIVSIFVLFICYSVLGI).

The protein belongs to the MurJ/MviN family.

Its subcellular location is the cell inner membrane. It participates in cell wall biogenesis; peptidoglycan biosynthesis. In terms of biological role, involved in peptidoglycan biosynthesis. Transports lipid-linked peptidoglycan precursors from the inner to the outer leaflet of the cytoplasmic membrane. This Borreliella burgdorferi (strain ATCC 35210 / DSM 4680 / CIP 102532 / B31) (Borrelia burgdorferi) protein is Probable lipid II flippase MurJ.